Reading from the N-terminus, the 816-residue chain is Acyl-homoserine lactone acylase QuiP (816 aa).

The N-terminal stretch at 1–33 (MASPALSHFLPRFGVAAAVAGVLSLTGCQTWNA) is a signal peptide. Catalysis depends on Ser-262, which acts as the Nucleophile.

This sequence belongs to the peptidase S45 family. Heterodimer of an alpha subunit and a beta subunit processed from the same precursor.

The protein localises to the periplasm. The enzyme catalyses an N-acyl-L-homoserine lactone + H2O = L-homoserine lactone + a carboxylate. Functionally, catalyzes the deacylation of acyl-homoserine lactone (AHL or acyl-HSL), releasing homoserine lactone (HSL) and the corresponding fatty acid. Possesses a specificity for the degradation of long-chain acyl-HSLs (side chains of seven or more carbons in length). The chain is Acyl-homoserine lactone acylase QuiP (quiP) from Pseudomonas fluorescens (strain Pf0-1).